A 227-amino-acid chain; its full sequence is Adapter protein MecA 1 (227 aa).

The protein belongs to the MecA family. In terms of assembly, homodimer.

Enables the recognition and targeting of unfolded and aggregated proteins to the ClpC protease or to other proteins involved in proteolysis. Acts negatively in the development of competence by binding ComK and recruiting it to the ClpCP protease. When overexpressed, inhibits sporulation. Also involved in Spx degradation by ClpC. The protein is Adapter protein MecA 1 (mecA1) of Bacillus cereus (strain ATCC 14579 / DSM 31 / CCUG 7414 / JCM 2152 / NBRC 15305 / NCIMB 9373 / NCTC 2599 / NRRL B-3711).